Reading from the N-terminus, the 106-residue chain is Large ribosomal subunit protein bL31B (106 aa).

Residues 85–106 (PVQVAEEPVAKGKKKPSLKKKK) form a disordered region. Residues 95 to 106 (KGKKKPSLKKKK) are compositionally biased toward basic residues.

The protein belongs to the bacterial ribosomal protein bL31 family. Type B subfamily. As to quaternary structure, part of the 50S ribosomal subunit.

This chain is Large ribosomal subunit protein bL31B, found in Chlamydia felis (strain Fe/C-56) (Chlamydophila felis).